The primary structure comprises 448 residues: Tubulin beta-1 chain (448 aa).

The GTP site is built by Gln-11, Glu-69, Ser-138, Gly-142, Thr-143, Gly-144, Asn-204, and Asn-226. Glu-69 serves as a coordination point for Mg(2+). The segment at 427-448 is disordered; sequence DATADEEGDLQEGESEYIEQEE. The segment covering 429–448 has biased composition (acidic residues); that stretch reads TADEEGDLQEGESEYIEQEE.

Belongs to the tubulin family. Dimer of alpha and beta chains. A typical microtubule is a hollow water-filled tube with an outer diameter of 25 nm and an inner diameter of 15 nM. Alpha-beta heterodimers associate head-to-tail to form protofilaments running lengthwise along the microtubule wall with the beta-tubulin subunit facing the microtubule plus end conferring a structural polarity. Microtubules usually have 13 protofilaments but different protofilament numbers can be found in some organisms and specialized cells. The cofactor is Mg(2+).

Its subcellular location is the cytoplasm. It localises to the cytoskeleton. Its function is as follows. Tubulin is the major constituent of microtubules, a cylinder consisting of laterally associated linear protofilaments composed of alpha- and beta-tubulin heterodimers. Microtubules grow by the addition of GTP-tubulin dimers to the microtubule end, where a stabilizing cap forms. Below the cap, tubulin dimers are in GDP-bound state, owing to GTPase activity of alpha-tubulin. This chain is Tubulin beta-1 chain, found in Brugia pahangi (Filarial nematode worm).